The sequence spans 213 residues: Peptidyl-tRNA hydrolase (213 aa).

Y15 provides a ligand contact to tRNA. The active-site Proton acceptor is H20. Residues F66, N68, and N114 each contribute to the tRNA site. The interval H187–Q213 is disordered. The span at A201 to Q213 shows a compositional bias: low complexity.

This sequence belongs to the PTH family. In terms of assembly, monomer.

The protein resides in the cytoplasm. It catalyses the reaction an N-acyl-L-alpha-aminoacyl-tRNA + H2O = an N-acyl-L-amino acid + a tRNA + H(+). Its function is as follows. Hydrolyzes ribosome-free peptidyl-tRNAs (with 1 or more amino acids incorporated), which drop off the ribosome during protein synthesis, or as a result of ribosome stalling. Functionally, catalyzes the release of premature peptidyl moieties from peptidyl-tRNA molecules trapped in stalled 50S ribosomal subunits, and thus maintains levels of free tRNAs and 50S ribosomes. The polypeptide is Peptidyl-tRNA hydrolase (Paracidovorax citrulli (strain AAC00-1) (Acidovorax citrulli)).